A 312-amino-acid chain; its full sequence is 4-hydroxyproline 2-epimerase (312 aa).

Residue cysteine 88 is the Proton acceptor of the active site. Substrate-binding positions include 89–90, histidine 208, and aspartate 234; that span reads GH. Cysteine 238 serves as the catalytic Proton donor. 239-240 serves as a coordination point for substrate; the sequence is GT.

This sequence belongs to the proline racemase family.

It carries out the reaction trans-4-hydroxy-L-proline = cis-4-hydroxy-D-proline. Its function is as follows. Catalyzes the epimerization of trans-4-hydroxy-L-proline (t4LHyp) to cis-4-hydroxy-D-proline (c4DHyp). Is likely involved in a degradation pathway that converts t4LHyp to alpha-ketoglutarate. Can also catalyze the epimerization of trans-3-hydroxy-L-proline (t3LHyp) to cis-3-hydroxy-D-proline (c3DHyp), albeit with 500-fold lower efficiency. Displays no proline racemase activity. This chain is 4-hydroxyproline 2-epimerase, found in Xanthomonas campestris pv. campestris (strain ATCC 33913 / DSM 3586 / NCPPB 528 / LMG 568 / P 25).